The following is a 901-amino-acid chain: MNIAKSIHFLSNKEALDKRLDRGLLGIRGRQADELSSLGLPVLPSVVIDATVSRSLYGEKLRSALSPYLRKFTLLNRKEYADAKNPMLLKVVLSPNLAISNYPVLHNFGLTRDTFAGFAERVGEHFATHEVFFLLKGVFGVLLGIAESEENTKGASEFVETLKEIEVFLQGGKSSPSGREAMNRYRALLPDGFFDDAYVQLEEAVRLVSKLLSFEEDGEDGVAILIQPMVYGNYGGGSYSGRFFSRNIITGEKKLQGQYFEERFDECDAEGSDVNAIKPAYLKQLQDIAWKLEDHSREIREVRFTIEAGSLWLIEQKPVEAKSTISLVRLLLDLYEREVVDAEYVVKSVKPGQLNEILHPVIDMTSVTGLKSSQGGIIGVPGAAVGRVYFTADSLIEAWRVAKMGGQDTRCILCMPATYAGDVKAIEVATGVLSNEGGYSAHASVVARQYGKISLVRPDMKIYSDKAVVDGMTINEGDFVTLNVPYYGESTLYMGAAQLIEPDPETSGLVSFIELAKGFVRSFHVRANADSPHDAELALAFGAQGIGLCRTEHMFFKEDRINVFRRMIFSENAEERTGSLKQLQKMQGEDFYGIFKVMQGHEVTIRLLDAPLHEFLPHGESEVSKFLEYLEKVCGKGLSREELQERISMLSEVNPMLGHRGCRIAISYPEIYAMQVRAVFEAVYRLQKEKISVYPEIMIPIVMNCRELKQIVYGKKIEGHAYQGIGSIEEEVRLALKAKEVDYKVGAMIELPAAALSADEIARYAQFFSFGTNDLTQTTLGLSRDDFNTFMPDYTMYDLVDGNPFAILDARVRELIEVAMQRGRLARPDIQLGLCGEHGSRSENIRFCMEVGLDYVSCSSYSVPIALLAIAQAEIENAEKEGRKPAWRGRSSAKSGGRRAR.

The tract at residues 1–321 is N-terminal; that stretch reads MNIAKSIHFL…WLIEQKPVEA (321 aa). The tract at residues 322–380 is linker 1; that stretch reads KSTISLVRLLLDLYEREVVDAEYVVKSVKPGQLNEILHPVIDMTSVTGLKSSQGGIIGV. The segment at 381 to 482 is central; the sequence is PGAAVGRVYF…TINEGDFVTL (102 aa). At serine 440 the chain carries Phosphoserine; by PDRP1. The active-site Tele-phosphohistidine intermediate is the histidine 442. Residues 483 to 522 form a linker 2 region; it reads NVPYYGESTLYMGAAQLIEPDPETSGLVSFIELAKGFVRS. Residues 523-901 form a C-terminal region; the sequence is FHVRANADSP…SAKSGGRRAR (379 aa). Residues arginine 550, arginine 606, glutamate 750, glycine 771, threonine 772, asparagine 773, and aspartate 774 each contribute to the substrate site. Residue glutamate 750 coordinates Mg(2+). Aspartate 774 is a Mg(2+) binding site. The active-site Proton donor is cysteine 835. The interval 879–901 is disordered; it reads EKEGRKPAWRGRSSAKSGGRRAR.

The protein belongs to the PEP-utilizing enzyme family. In terms of assembly, homodimer. It depends on Mg(2+) as a cofactor. In terms of processing, phosphorylation of Ser-440 in the dark inactivates the enzyme. Dephosphorylation upon light stimulation reactivates the enzyme.

It catalyses the reaction pyruvate + phosphate + ATP = phosphoenolpyruvate + AMP + diphosphate + H(+). Activated by light-induced dephosphorylation. Inhibited by dark-induced phosphorylation. Both reactions are catalyzed by PDRP1. Functionally, catalyzes the reversible phosphorylation of pyruvate and phosphate. This is Pyruvate, phosphate dikinase (ppdK) from Treponema pallidum (strain Nichols).